The primary structure comprises 432 residues: Putative cyclin-F1-4 (432 aa).

Belongs to the cyclin family. Cyclin F subfamily.

This Oryza sativa subsp. japonica (Rice) protein is Putative cyclin-F1-4 (CycF1-4).